A 447-amino-acid polypeptide reads, in one-letter code: MSQNHTILQNLPVGQKVGIAFSGGLDTSAALLWMKLKGALPYAYTANLGQPDEDDYNAIPKKAMEYGAENARLIDCRAQLAHEGIAAIQCGAFHVSTGGIAYFNTTPLGRAVTGTMLVSAMKEDDVNIWGDGSTYKGNDIERFYRYGLLTNPALKIYKPWLDQQFIDELGGRHEMSEFLIANGFNYKMSVEKAYSTDSNMLGATHEAKDLEFLNSGIKIVKPIMGVAFWDENVEVSPEEVSVRFEEGVPVALNGKEYADPVELFLEANRIGGRHGLGMSDQIENRIIEAKSRGIYEAPGMALFHIAYERLVTGIHNEDTIEQYRINGLRLGRLLYQGRWFDSQALMLRETAQRWVAKAVTGEVTLELRRGNDYSILNTESPNLTYQPERLSMEKVEGAAFTPLDRIGQLTMRNLDITDTRAKLGIYSQSGLLSLGEGSVLPQLGNKK.

Residues 20 to 28 and Ala-46 each bind ATP; that span reads AFSGGLDTS. Residue Tyr-102 coordinates L-citrulline. Gly-132 and Thr-134 together coordinate ATP. The L-aspartate site is built by Thr-134, Asn-138, and Asp-139. Asn-138 contributes to the L-citrulline binding site. Asp-139 contributes to the ATP binding site. Residues Arg-142 and Ser-195 each contribute to the L-citrulline site. Asp-197 serves as a coordination point for ATP. The L-citrulline site is built by Thr-204, Glu-206, and Glu-283.

The protein belongs to the argininosuccinate synthase family. Type 2 subfamily. In terms of assembly, homotetramer.

It localises to the cytoplasm. It carries out the reaction L-citrulline + L-aspartate + ATP = 2-(N(omega)-L-arginino)succinate + AMP + diphosphate + H(+). The protein operates within amino-acid biosynthesis; L-arginine biosynthesis; L-arginine from L-ornithine and carbamoyl phosphate: step 2/3. This is Argininosuccinate synthase from Neisseria meningitidis serogroup C / serotype 2a (strain ATCC 700532 / DSM 15464 / FAM18).